The sequence spans 422 residues: Platelet-activating factor acetylhydrolase (422 aa).

An N-terminal signal peptide occupies residues 1–21; sequence MASLWVRARRVFMKSRASGFS. Ser266 acts as the Nucleophile in catalysis. Asp289 serves as the catalytic Charge relay system. A glycan (N-linked (GlcNAc...) asparagine) is linked at Asn331. His345 (charge relay system) is an active-site residue.

This sequence belongs to the AB hydrolase superfamily. Lipase family. Plasma.

The protein resides in the secreted. It is found in the extracellular space. It catalyses the reaction a 1-O-alkyl-2-acetyl-sn-glycero-3-phosphocholine + H2O = a 1-O-alkyl-sn-glycero-3-phosphocholine + acetate + H(+). Its function is as follows. Modulates the action of platelet-activating factor (PAF) by hydrolyzing the sn-2 ester bond to yield the biologically inactive lyso-PAF. Has a specificity for substrates with a short residue at the sn-2 position. It is inactive against long-chain phospholipids. The sequence is that of Platelet-activating factor acetylhydrolase (PLA2G7) from Gallus gallus (Chicken).